Here is a 922-residue protein sequence, read N- to C-terminus: Pyruvate dehydrogenase E1 component (922 aa).

In terms of assembly, homodimer. Part of an unusual ODH/PDH supercomplex, consisting of AceE (E1), AceF (E2), and Lpd (E3) together with OdhA (E1+E2). The cofactor is Mg(2+). Thiamine diphosphate serves as cofactor.

The enzyme catalyses N(6)-[(R)-lipoyl]-L-lysyl-[protein] + pyruvate + H(+) = N(6)-[(R)-S(8)-acetyldihydrolipoyl]-L-lysyl-[protein] + CO2. Functionally, is a specific component of the pyruvate dehydrogenase (PDH) complex, that catalyzes the overall conversion of pyruvate to acetyl-CoA and CO(2). AceE has reductase activity with pyruvate but does not react with 2-oxoglutarate. This is Pyruvate dehydrogenase E1 component (aceE) from Corynebacterium glutamicum (strain ATCC 13032 / DSM 20300 / JCM 1318 / BCRC 11384 / CCUG 27702 / LMG 3730 / NBRC 12168 / NCIMB 10025 / NRRL B-2784 / 534).